The chain runs to 304 residues: Protoheme IX farnesyltransferase (304 aa).

Transmembrane regions (helical) follow at residues 32–52 (VVALMLLTVLVGMCLAVPGSV), 54–74 (LQPLVIGMIGIGMMAGAAAAF), 104–124 (ALTFAISLAALGFVLLYTLVN), 126–146 (LTAWLTFASLIGYALVYTAYL), 154–174 (IVVGGLAGAMPPLLGWTSVTG), 180–200 (ALLLVIIIFAWTPPHFWALAI), 226–246 (CILLYTVLLAIACLLPVLVGM), 247–267 (CGPVYLVGSTLLSCGFIYKAW), and 284–304 (FSIYHLMLLFLVLLVDHYLWV).

This sequence belongs to the UbiA prenyltransferase family. Protoheme IX farnesyltransferase subfamily.

Its subcellular location is the cell inner membrane. The catalysed reaction is heme b + (2E,6E)-farnesyl diphosphate + H2O = Fe(II)-heme o + diphosphate. Its pathway is porphyrin-containing compound metabolism; heme O biosynthesis; heme O from protoheme: step 1/1. In terms of biological role, converts heme B (protoheme IX) to heme O by substitution of the vinyl group on carbon 2 of heme B porphyrin ring with a hydroxyethyl farnesyl side group. This is Protoheme IX farnesyltransferase from Shewanella sediminis (strain HAW-EB3).